Here is a 352-residue protein sequence, read N- to C-terminus: Zinc finger protein 185 (352 aa).

Disordered regions lie at residues 1 to 73 (MTTE…ELQS) and 86 to 121 (DVLP…ITPP). S18 is subject to Phosphoserine. The span at 61 to 72 (KKTTSSPTQELQ) shows a compositional bias: polar residues. The residue at position 137 (T137) is a Phosphothreonine. Over residues 251–268 (VSSGKPVSSHCDSPSSIE) the composition is skewed to polar residues. Positions 251 to 287 (VSSGKPVSSHCDSPSSIEDSLDLAKKPPHEGTPSERP) are disordered. Residues 272–287 (DLAKKPPHEGTPSERP) are compositionally biased toward basic and acidic residues. An LIM zinc-binding domain is found at 292-347 (CTYCSHEIQDCPKITLEHLGICCHEYCFKCGICNKPMGDLLDQIFIHRDTIHCGKC).

Expressed in skin, kidney, ovary, testis. Also expressed in brain, cartilage, heart, lung, spleen and thymus.

The protein resides in the cytoplasm. It localises to the cytoskeleton. It is found in the cell junction. Its subcellular location is the focal adhesion. Its function is as follows. May be involved in the regulation of cellular proliferation and/or differentiation. This Mus musculus (Mouse) protein is Zinc finger protein 185 (Znf185).